A 346-amino-acid chain; its full sequence is Cyclin-dependent kinase 7 (346 aa).

Position 2 is an N-acetylalanine (Ala2). Ser7 is modified (phosphoserine). The region spanning 12-295 (YEKLDFLGEG…ATQALKMKYF (284 aa)) is the Protein kinase domain. ATP-binding positions include 18–26 (LGEGQFATV) and Lys41. Residue Asp137 is the Proton acceptor of the active site. Ser164 carries the post-translational modification Phosphoserine; by CDK1 and CDK2. Thr170 bears the Phosphothreonine; by CDK2 mark. A Phosphoserine modification is found at Ser321.

It belongs to the protein kinase superfamily. CMGC Ser/Thr protein kinase family. CDC2/CDKX subfamily. As to quaternary structure, associates primarily with cyclin-H (CCNH) and MAT1 to form the CAK complex. CAK can further associate with the core-TFIIH to form the TFIIH basal transcription factor; this complex is sensitive to UV light. The CAK complex binds to p53/TP53 in response to DNA damage. Interacts with CDK2, SF1/NR5A1, PUF60 and PRKCI. Interacts with HINT1. Phosphorylation of Ser-164 during mitosis inactivates the enzyme. Phosphorylation of Thr-170 is required for activity. Phosphorylated at Ser-164 and Thr-170 by CDK2. Ubiquitous.

It localises to the nucleus. The protein resides in the cytoplasm. It is found in the perinuclear region. The catalysed reaction is L-seryl-[protein] + ATP = O-phospho-L-seryl-[protein] + ADP + H(+). It catalyses the reaction L-threonyl-[protein] + ATP = O-phospho-L-threonyl-[protein] + ADP + H(+). It carries out the reaction [DNA-directed RNA polymerase] + ATP = phospho-[DNA-directed RNA polymerase] + ADP + H(+). Inactivated by phosphorylation. Repressed by roscovitine (seliciclib, CYC202), R547 (Ro-4584820) and SNS-032 (BMS-387032). The association of p53/TP53 to the CAK complex in response to DNA damage reduces kinase activity toward CDK2 and RNA polymerase II repetitive C-terminal domain (CTD), thus stopping cell cycle progression. The inactivation by roscovitine promotes caspase-mediated apoptosis in leukemic cells. Specifically inactivated by THZ1. Serine/threonine kinase involved in cell cycle control and in RNA polymerase II-mediated RNA transcription. Cyclin-dependent kinases (CDKs) are activated by the binding to a cyclin and mediate the progression through the cell cycle. Each different complex controls a specific transition between 2 subsequent phases in the cell cycle. Required for both activation and complex formation of CDK1/cyclin-B during G2-M transition, and for activation of CDK2/cyclins during G1-S transition (but not complex formation). CDK7 is the catalytic subunit of the CDK-activating kinase (CAK) complex. Phosphorylates SPT5/SUPT5H, SF1/NR5A1, POLR2A, p53/TP53, CDK1, CDK2, CDK4, CDK6 and CDK11B/CDK11. Initiates transcription by RNA polymerase II by mediating phosphorylation of POLR2A at 'Ser-5' of the repetitive C-terminal domain (CTD) when POLR2A is in complex with DNA, promoting dissociation from DNA and initiation. CAK activates the cyclin-associated kinases CDK1, CDK2, CDK4 and CDK6 by threonine phosphorylation, thus regulating cell cycle progression. CAK complexed to the core-TFIIH basal transcription factor activates RNA polymerase II by serine phosphorylation of the CTD of POLR2A, allowing its escape from the promoter and elongation of the transcripts. Its expression and activity are constant throughout the cell cycle. Upon DNA damage, triggers p53/TP53 activation by phosphorylation, but is inactivated in turn by p53/TP53; this feedback loop may lead to an arrest of the cell cycle and of the transcription, helping in cell recovery, or to apoptosis. Required for DNA-bound peptides-mediated transcription and cellular growth inhibition. The chain is Cyclin-dependent kinase 7 (CDK7) from Homo sapiens (Human).